The following is an 87-amino-acid chain: Small ribosomal subunit protein uS15c (87 aa).

Belongs to the universal ribosomal protein uS15 family. As to quaternary structure, part of the 30S ribosomal subunit.

The protein resides in the plastid. It localises to the chloroplast. This chain is Small ribosomal subunit protein uS15c (rps15), found in Coffea arabica (Arabian coffee).